The chain runs to 959 residues: E3 ubiquitin-protein ligase NEDD4-like (959 aa).

The 121-residue stretch at 10 to 130 folds into the C2 domain; that stretch reads PWHGVCVPVC…TEDPTMERPY (121 aa). Disordered stretches follow at residues 183–206, 248–275, and 289–316; these read SNDSASQHQEELPPPPLPPGWEEK, AAHRRFRSRRHISEDLEPEPSEGGDVPE, and DSLGLALPPPPASPGSRTSPQELSEELS. One can recognise a WW 1 domain in the interval 197 to 230; the sequence is PPLPPGWEEKVDNLGRTYYVNHNNRTTQWHRPSL. Phosphoserine is present on S316. T322 carries the phosphothreonine modification. Phosphoserine; by WNK1 and WNK4 is present on S346. The 34-residue stretch at 369 to 402 folds into the WW 2 domain; that stretch reads PGLPSGWEERKDAKGRTYYVNHNNRTTTWTRPIM. Residues 408–478 form a disordered region; it reads GASGSATNSN…YNSPKPQHKV (71 aa). At S430 the chain carries Phosphoserine. Position 432 is a phosphoserine; by SGK1 (S432). At S433 the chain carries Phosphoserine; by WNK1 and WNK4. Positions 444-455 are enriched in basic and acidic residues; sequence GAKDSPVRRAVK. S448 is modified (phosphoserine; by SGK1). 4 positions are modified to phosphoserine: S459, S463, S467, and S471. WW domains lie at 481–514 and 532–565; these read SFLPPGWEMRIAPNGRPFFIDHNTKTTTWEDPRL and GPLPPGWEERIHLDGRTFYIDHNSKITQWEDPRL. Residues 624–958 enclose the HECT domain; sequence RPDVLKARLW…VENAQGFEGV (335 aa). C926 (glycyl thioester intermediate) is an active-site residue.

Interacts with UBE2E3. Interacts with NDFIP1; this interaction activates the E3 ubiquitin-protein ligase. Interacts with NDFIP2; this interaction activates the E3 ubiquitin-protein ligase. Interacts (via WW domains) with SCN1A. Interacts (via WW domains) with SCN2A. Interacts (via WW domains) with SCN3A. Interacts (via WW domains) with SCN5A. Interacts (via WW domains) with SCN8A. Interacts (via WW domains) with SCN9A. Interacts (via WW domains) with SCN10A. Interacts (via WW domains) with CLCN5. Interacts with SMAD2. Interacts with SMAD3. Interacts with SMAD6. Interacts with SMAD7. The phosphorylated form interacts with 14-3-3 proteins. Interacts with TNK2. Interacts with WNK1. Interacts with SGK1. Interacts (via C2 domain) with NPC2. Interacts with ARRDC4. Interacts with KCNQ1; promotes internalization of KCNQ1. Interacts (via domains WW1, 3 and 4) with USP36; the interaction inhibits ubiquitination of, at least, NTRK1, KCNQ2 and KCNQ3 by NEDD4L. Interacts with PRRG4 (via cytoplasmic domain). Interacts with LDLRAD3; the interaction is direct. Interacts with TTYH2 and TTYH3. Phosphorylated; which impairs interaction with SCNN. Interaction with YWHAH inhibits dephosphorylation. Post-translationally, auto-ubiquitinated.

The protein resides in the cytoplasm. It localises to the golgi apparatus. The protein localises to the endosome. It is found in the multivesicular body. The enzyme catalyses S-ubiquitinyl-[E2 ubiquitin-conjugating enzyme]-L-cysteine + [acceptor protein]-L-lysine = [E2 ubiquitin-conjugating enzyme]-L-cysteine + N(6)-ubiquitinyl-[acceptor protein]-L-lysine.. It participates in protein modification; protein ubiquitination. Activated by NDFIP1- and NDFIP2-binding. Functionally, E3 ubiquitin-protein ligase which accepts ubiquitin from an E2 ubiquitin-conjugating enzyme in the form of a thioester and then directly transfers the ubiquitin to targeted substrates. Inhibits TGF-beta signaling by triggering SMAD2 and TGFBR1 ubiquitination and proteasome-dependent degradation. Promotes ubiquitination and internalization of various plasma membrane channels such as ENaC, Nav1.2, Nav1.3, Nav1.5, Nav1.7, Nav1.8, Kv1.3, KCNH2, EAAT1 or CLC5. Promotes ubiquitination and degradation of SGK1 and TNK2. Ubiquitinates BRAT1 and this ubiquitination is enhanced in the presence of NDFIP1. Plays a role in dendrite formation by melanocytes. Involved in the regulation of TOR signaling. Ubiquitinates TTYH2 and TTYH3 and regulates protein levels of TTYH2. The polypeptide is E3 ubiquitin-protein ligase NEDD4-like (NEDD4L) (Pongo abelii (Sumatran orangutan)).